A 340-amino-acid chain; its full sequence is Entry-fusion complex protein OPG094 (340 aa).

The tract at residues 1 to 20 (MGGGVSVELPKRDPPPGVPT) is disordered. A lipid anchor (N-myristoyl glycine; by host) is attached at G2. Topologically, residues 2-319 (GGGVSVELPK…VQHNIKHSFD (318 aa)) are virion surface. The helical; Signal-anchor for type II membrane protein transmembrane segment at 320-340 (LKLHLISLLSLLVIWILIVAI) threads the bilayer.

It belongs to the orthopoxvirus OPG086 family. In terms of assembly, interacts with OPG143. Component of the entry fusion complex (EFC) composed of OPG053, OPG076, OPG086, OPG094, OPG095, OPG099, OPG107, OPG143, OPG104, OPG147 and OPG155. Except for OPG095 and OPG053, each of the EFC proteins is required for assembly or stability of the complex. In terms of processing, unglycosylated because produced in viral factories instead of the classic ER -Golgi route.

Its subcellular location is the virion membrane. In terms of biological role, component of the entry fusion complex (EFC), which consists of 11 proteins. During cell infection, this complex mediates entry of the virion core into the host cytoplasm by a two-step mechanism consisting of lipid mixing of the viral and cellular membranes and subsequent pore formation. The polypeptide is Entry-fusion complex protein OPG094 (OPG094) (Vaccinia virus (strain Copenhagen) (VACV)).